Here is an 85-residue protein sequence, read N- to C-terminus: Small ribosomal subunit protein uS17 (85 aa).

The protein belongs to the universal ribosomal protein uS17 family. Part of the 30S ribosomal subunit.

Functionally, one of the primary rRNA binding proteins, it binds specifically to the 5'-end of 16S ribosomal RNA. This chain is Small ribosomal subunit protein uS17, found in Anaeromyxobacter sp. (strain Fw109-5).